The chain runs to 331 residues: Flotillin-like protein FloA (331 aa).

2 consecutive transmembrane segments (helical) span residues L6 to V26 and V28 to G48. The segment at Q236–S331 is required for correct localization. 4 consecutive short sequence motifs (EA repeat) follow at residues A240–A242, A251–E253, E278–E282, and A288–A290. Residues E312–S331 are disordered.

The protein belongs to the flotillin-like FloA family. Homooligomerizes. Interacts with FloT. Interacts with FtsH midcell. Interacts with PhoR, colocalizes with PhoR in FloA-only membrane rafts.

It localises to the cell membrane. It is found in the membrane raft. Functionally, found in functional membrane microdomains (FMM) that may be equivalent to eukaryotic membrane rafts. FMMs are highly dynamic and increase in number as cells age. FloA and FloT function is partially redundant; double deletions have marked synthetic phenotypes. Flotillins are thought to be important factors in membrane fluidity, especially during periods of rapid growth in rich media. Whether specific proteins are associated with FMMs is controversial; in one study FloT rafts have been shown to include proteins involved in adaptation to stationary phase, while FloA-FloT rafts include proteins involved in differentiation including sporulation, biofilm formation and DNA uptake competence. Another (more finely resolved) study only showed association of NfeD2 with FloT rafts of all the proteins examined. Involved in spatial organization of membranes, perhaps recruiting proteins to specific membrane regions. Simultaneous overexpression of both FloA and FloT leads to defects in cell division and differentiation, in part caused by stabilization of FtsH and its subsequent increased ability to degrade proteins. Cells make more biofilm, are about half as long, have less EzrA and more frequent Z-rings. The sequence is that of Flotillin-like protein FloA from Bacillus subtilis (strain 168).